Reading from the N-terminus, the 207-residue chain is Uridine kinase (207 aa).

11 to 18 (GGSGSGKT) serves as a coordination point for ATP.

The protein belongs to the uridine kinase family.

It localises to the cytoplasm. It catalyses the reaction uridine + ATP = UMP + ADP + H(+). The catalysed reaction is cytidine + ATP = CMP + ADP + H(+). It participates in pyrimidine metabolism; CTP biosynthesis via salvage pathway; CTP from cytidine: step 1/3. The protein operates within pyrimidine metabolism; UMP biosynthesis via salvage pathway; UMP from uridine: step 1/1. The polypeptide is Uridine kinase (Staphylococcus aureus (strain Mu3 / ATCC 700698)).